A 423-amino-acid chain; its full sequence is Imidazolonepropionase (423 aa).

Fe(3+) contacts are provided by H78 and H80. 2 residues coordinate Zn(2+): H78 and H80. R87, Y150, and H183 together coordinate 4-imidazolone-5-propanoate. Residue Y150 coordinates N-formimidoyl-L-glutamate. H247 lines the Fe(3+) pocket. H247 is a Zn(2+) binding site. E250 contributes to the 4-imidazolone-5-propanoate binding site. D322 contacts Fe(3+). Residue D322 participates in Zn(2+) binding. Positions 324 and 326 each coordinate N-formimidoyl-L-glutamate. S327 contributes to the 4-imidazolone-5-propanoate binding site.

This sequence belongs to the metallo-dependent hydrolases superfamily. HutI family. The cofactor is Zn(2+). Fe(3+) is required as a cofactor.

The protein resides in the cytoplasm. The enzyme catalyses 4-imidazolone-5-propanoate + H2O = N-formimidoyl-L-glutamate. It participates in amino-acid degradation; L-histidine degradation into L-glutamate; N-formimidoyl-L-glutamate from L-histidine: step 3/3. Functionally, catalyzes the hydrolytic cleavage of the carbon-nitrogen bond in imidazolone-5-propanoate to yield N-formimidoyl-L-glutamate. It is the third step in the universal histidine degradation pathway. The chain is Imidazolonepropionase from Bacillus mycoides (strain KBAB4) (Bacillus weihenstephanensis).